Here is a 365-residue protein sequence, read N- to C-terminus: tRNA(Met) cytidine acetate ligase (365 aa).

Residues Ile-7–Leu-20, Gly-96, Asn-152, and Arg-175 each bind ATP.

Belongs to the TmcAL family.

Its subcellular location is the cytoplasm. The catalysed reaction is cytidine(34) in elongator tRNA(Met) + acetate + ATP = N(4)-acetylcytidine(34) in elongator tRNA(Met) + AMP + diphosphate. Its function is as follows. Catalyzes the formation of N(4)-acetylcytidine (ac(4)C) at the wobble position of elongator tRNA(Met), using acetate and ATP as substrates. First activates an acetate ion to form acetyladenylate (Ac-AMP) and then transfers the acetyl group to tRNA to form ac(4)C34. The sequence is that of tRNA(Met) cytidine acetate ligase from Streptococcus pneumoniae (strain Hungary19A-6).